A 245-amino-acid chain; its full sequence is Probable transcriptional regulatory protein BF2589 (245 aa).

The segment at 225 to 245 (EDEDVQNVYTNMKPADNEGEE) is disordered.

Belongs to the TACO1 family.

It is found in the cytoplasm. This Bacteroides fragilis (strain ATCC 25285 / DSM 2151 / CCUG 4856 / JCM 11019 / LMG 10263 / NCTC 9343 / Onslow / VPI 2553 / EN-2) protein is Probable transcriptional regulatory protein BF2589.